Here is a 177-residue protein sequence, read N- to C-terminus: Large ribosomal subunit protein uL6 (177 aa).

Belongs to the universal ribosomal protein uL6 family. In terms of assembly, part of the 50S ribosomal subunit.

This protein binds to the 23S rRNA, and is important in its secondary structure. It is located near the subunit interface in the base of the L7/L12 stalk, and near the tRNA binding site of the peptidyltransferase center. The protein is Large ribosomal subunit protein uL6 of Salmonella dublin (strain CT_02021853).